The sequence spans 330 residues: Type I restriction enzyme MpnII specificity subunit (330 aa).

The protein belongs to the type-I restriction system S methylase family. The methyltransferase is composed of M and S polypeptides.

In terms of biological role, the specificity (S) subunit of a type I restriction enzyme; this subunit dictates DNA sequence specificity. The M and S subunits together form a methyltransferase (MTase) that probably methylates A-2 on the top strand and A-3 on the bottom strand of the sequence 5'-GAN(7)TAY-3'. As the bacterial DNA is methylated on this sequence and this is the only type I methylase in the genome, it is probably responsible for all of the methylation on this site in the genome. The R subunit has multiple frameshifts and is probably not expressed in this bacteria. This Mycoplasma pneumoniae (strain ATCC 29342 / M129 / Subtype 1) (Mycoplasmoides pneumoniae) protein is Type I restriction enzyme MpnII specificity subunit.